Consider the following 496-residue polypeptide: Lysine--tRNA ligase (496 aa).

Mg(2+) is bound by residues Glu409 and Glu416.

It belongs to the class-II aminoacyl-tRNA synthetase family. As to quaternary structure, homodimer. The cofactor is Mg(2+).

Its subcellular location is the cytoplasm. The catalysed reaction is tRNA(Lys) + L-lysine + ATP = L-lysyl-tRNA(Lys) + AMP + diphosphate. This is Lysine--tRNA ligase from Streptococcus pneumoniae serotype 4 (strain ATCC BAA-334 / TIGR4).